Reading from the N-terminus, the 233-residue chain is Ion-translocating oxidoreductase complex subunit E (233 aa).

The next 5 helical transmembrane spans lie at L22 to G42, I69 to A89, G93 to G113, A128 to I148, and P182 to A202.

It belongs to the NqrDE/RnfAE family. In terms of assembly, the complex is composed of six subunits: RnfA, RnfB, RnfC, RnfD, RnfE and RnfG.

It localises to the cell inner membrane. Part of a membrane-bound complex that couples electron transfer with translocation of ions across the membrane. This chain is Ion-translocating oxidoreductase complex subunit E, found in Erwinia tasmaniensis (strain DSM 17950 / CFBP 7177 / CIP 109463 / NCPPB 4357 / Et1/99).